Here is a 395-residue protein sequence, read N- to C-terminus: Ribonuclease D (395 aa).

Positions 14–181 constitute a 3'-5' exonuclease domain; that stretch reads LITKSEDLAA…VYETLRDRLE (168 aa). The HRDC domain occupies 219-300; sequence NRRYLGLLRA…AEARGLPDAD (82 aa).

It belongs to the RNase D family. A divalent metal cation serves as cofactor.

It localises to the cytoplasm. It catalyses the reaction Exonucleolytic cleavage that removes extra residues from the 3'-terminus of tRNA to produce 5'-mononucleotides.. Exonuclease involved in the 3' processing of various precursor tRNAs. Initiates hydrolysis at the 3'-terminus of an RNA molecule and releases 5'-mononucleotides. The protein is Ribonuclease D of Granulibacter bethesdensis (strain ATCC BAA-1260 / CGDNIH1).